Here is a 397-residue protein sequence, read N- to C-terminus: Subtilisin-like protease 12 (397 aa).

The first 19 residues, 1–19 (MSIFKMMLIYFAILWVVNA), serve as a signal peptide directing secretion. A propeptide spanning residues 20-116 (AQLLDIDPQG…VEPNKEMQVA (97 aa)) is cleaved from the precursor. Residues 35 to 115 (YIVVMKDRVS…FVEPNKEMQV (81 aa)) enclose the Inhibitor I9 domain. N-linked (GlcNAc...) asparagine glycosylation is found at Asn123, Asn136, and Asn150. The region spanning 125 to 397 (TWGLSRISHK…NKLLYNGSGA (273 aa)) is the Peptidase S8 domain. Catalysis depends on charge relay system residues Asp157 and His188. Asn249, Asn305, and Asn334 each carry an N-linked (GlcNAc...) asparagine glycan. Ser343 functions as the Charge relay system in the catalytic mechanism. Residues Asn385 and Asn393 are each glycosylated (N-linked (GlcNAc...) asparagine).

It belongs to the peptidase S8 family.

It localises to the secreted. Secreted subtilisin-like serine protease with keratinolytic activity that contributes to pathogenicity. This Trichophyton verrucosum (strain HKI 0517) protein is Subtilisin-like protease 12 (SUB12).